The following is a 480-amino-acid chain: Endothelial transcription factor GATA-2 (480 aa).

S73 carries the phosphoserine modification. R86 carries the asymmetric dimethylarginine modification. A disordered region spans residues 166–208 (SGSHLFGFPPTPPKEVSPDPSTTGAASPASPSAGGSVARGEDK). The segment covering 183 to 201 (PDPSTTGAASPASPSAGGS) has biased composition (low complexity). S192 carries the post-translational modification Phosphoserine. GATA-type zinc fingers lie at residues 295–319 (CVNC…CNAC) and 349–373 (CANC…CNAC). K389 participates in a covalent cross-link: Glycyl lysine isopeptide (Lys-Gly) (interchain with G-Cter in SUMO2). Residues 457-480 (TPIHPSSSLSFGHPHPSSMVTAMG) are disordered.

As to quaternary structure, interacts with BRD3. Interacts with AR and CCAR1. Interacts with MDFIC.

The protein localises to the nucleus. Functionally, transcriptional activator which regulates endothelin-1 gene expression in endothelial cells. Binds to the consensus sequence 5'-AGATAG-3'. Plays an important role in the regulation of phagocytosis in alveolar macrophages, particularly during P.carinii infection. The polypeptide is Endothelial transcription factor GATA-2 (Rattus norvegicus (Rat)).